The chain runs to 396 residues: Serpin-ZXA (396 aa).

An RCL region spans residues 343–367 (GTEAAAATAAVITLRSAPIAEDFVA).

This sequence belongs to the serpin family.

Functionally, probable serine protease inhibitor. The sequence is that of Serpin-ZXA from Oryza sativa subsp. japonica (Rice).